A 397-amino-acid polypeptide reads, in one-letter code: Elongation factor Tu (397 aa).

The tr-type G domain occupies 10–207 (LPHCNVGTIG…TLDSYIPQPE (198 aa)). The segment at 19–26 (GHVDHGKT) is G1. Residue 19-26 (GHVDHGKT) coordinates GTP. A Mg(2+)-binding site is contributed by threonine 26. Positions 60–64 (GITIN) are G2. Residues 81 to 84 (DCPG) form a G3 region. Residues 81–85 (DCPGH) and 136–139 (NKAD) contribute to the GTP site. The G4 stretch occupies residues 136–139 (NKAD). Positions 174–176 (SAR) are G5.

The protein belongs to the TRAFAC class translation factor GTPase superfamily. Classic translation factor GTPase family. EF-Tu/EF-1A subfamily. In terms of assembly, monomer.

The protein resides in the cytoplasm. The enzyme catalyses GTP + H2O = GDP + phosphate + H(+). In terms of biological role, GTP hydrolase that promotes the GTP-dependent binding of aminoacyl-tRNA to the A-site of ribosomes during protein biosynthesis. The polypeptide is Elongation factor Tu (Pseudomonas syringae pv. tomato (strain ATCC BAA-871 / DC3000)).